Here is a 346-residue protein sequence, read N- to C-terminus: uncharacterized protein (346 aa).

The protein belongs to the IIV-6 359L family.

This is an uncharacterized protein from Invertebrate iridescent virus 6 (IIV-6).